The chain runs to 240 residues: 1-(5-phosphoribosyl)-5-[(5-phosphoribosylamino)methylideneamino] imidazole-4-carboxamide isomerase (240 aa).

D8 (proton acceptor) is an active-site residue. D129 (proton donor) is an active-site residue.

Belongs to the HisA/HisF family.

The protein localises to the cytoplasm. It catalyses the reaction 1-(5-phospho-beta-D-ribosyl)-5-[(5-phospho-beta-D-ribosylamino)methylideneamino]imidazole-4-carboxamide = 5-[(5-phospho-1-deoxy-D-ribulos-1-ylimino)methylamino]-1-(5-phospho-beta-D-ribosyl)imidazole-4-carboxamide. It participates in amino-acid biosynthesis; L-histidine biosynthesis; L-histidine from 5-phospho-alpha-D-ribose 1-diphosphate: step 4/9. The protein is 1-(5-phosphoribosyl)-5-[(5-phosphoribosylamino)methylideneamino] imidazole-4-carboxamide isomerase of Oceanobacillus iheyensis (strain DSM 14371 / CIP 107618 / JCM 11309 / KCTC 3954 / HTE831).